A 460-amino-acid polypeptide reads, in one-letter code: Proline--tRNA ligase (460 aa).

It belongs to the class-II aminoacyl-tRNA synthetase family. ProS type 3 subfamily. As to quaternary structure, homodimer.

The protein localises to the cytoplasm. The catalysed reaction is tRNA(Pro) + L-proline + ATP = L-prolyl-tRNA(Pro) + AMP + diphosphate. Its function is as follows. Catalyzes the attachment of proline to tRNA(Pro) in a two-step reaction: proline is first activated by ATP to form Pro-AMP and then transferred to the acceptor end of tRNA(Pro). The sequence is that of Proline--tRNA ligase from Methanococcus maripaludis (strain C5 / ATCC BAA-1333).